The primary structure comprises 384 residues: 4-hydroxy-3-methylbut-2-en-1-yl diphosphate synthase (flavodoxin) (384 aa).

4 residues coordinate [4Fe-4S] cluster: C280, C283, C315, and E322.

It belongs to the IspG family. The cofactor is [4Fe-4S] cluster.

It carries out the reaction (2E)-4-hydroxy-3-methylbut-2-enyl diphosphate + oxidized [flavodoxin] + H2O + 2 H(+) = 2-C-methyl-D-erythritol 2,4-cyclic diphosphate + reduced [flavodoxin]. It functions in the pathway isoprenoid biosynthesis; isopentenyl diphosphate biosynthesis via DXP pathway; isopentenyl diphosphate from 1-deoxy-D-xylulose 5-phosphate: step 5/6. Converts 2C-methyl-D-erythritol 2,4-cyclodiphosphate (ME-2,4cPP) into 1-hydroxy-2-methyl-2-(E)-butenyl 4-diphosphate. This is 4-hydroxy-3-methylbut-2-en-1-yl diphosphate synthase (flavodoxin) from Parafrankia sp. (strain EAN1pec).